Reading from the N-terminus, the 89-residue chain is Elongation factor 1-beta (89 aa).

Belongs to the EF-1-beta/EF-1-delta family.

Its function is as follows. Promotes the exchange of GDP for GTP in EF-1-alpha/GDP, thus allowing the regeneration of EF-1-alpha/GTP that could then be used to form the ternary complex EF-1-alpha/GTP/AAtRNA. The chain is Elongation factor 1-beta from Methanococcus aeolicus (strain ATCC BAA-1280 / DSM 17508 / OCM 812 / Nankai-3).